The following is a 428-amino-acid chain: Enolase (428 aa).

Gln-163 contacts (2R)-2-phosphoglycerate. Glu-205 serves as the catalytic Proton donor. Positions 242, 285, and 312 each coordinate Mg(2+). (2R)-2-phosphoglycerate contacts are provided by Lys-337, Arg-366, Ser-367, and Lys-388. Residue Lys-337 is the Proton acceptor of the active site.

Belongs to the enolase family. The cofactor is Mg(2+).

The protein resides in the cytoplasm. The protein localises to the secreted. It localises to the cell surface. It carries out the reaction (2R)-2-phosphoglycerate = phosphoenolpyruvate + H2O. It functions in the pathway carbohydrate degradation; glycolysis; pyruvate from D-glyceraldehyde 3-phosphate: step 4/5. Its function is as follows. Catalyzes the reversible conversion of 2-phosphoglycerate (2-PG) into phosphoenolpyruvate (PEP). It is essential for the degradation of carbohydrates via glycolysis. In Finegoldia magna (strain ATCC 29328 / DSM 20472 / WAL 2508) (Peptostreptococcus magnus), this protein is Enolase.